The following is a 304-amino-acid chain: Probable aquaporin NIP5-1 (304 aa).

2 helical membrane passes run 80–100 (LGAE…GPIV) and 106–126 (GAET…IIIL). Positions 137 to 139 (NPS) match the NPA 1 motif. 3 helical membrane passes run 157–177 (AYIA…KGVF), 195–215 (AFAL…AVAT), and 219–239 (AVGE…ILVA). The NPA 2 signature appears at 248 to 250 (NPV). A helical transmembrane segment spans residues 266 to 286 (WVYLVAPTLGAISGAAVYTGV). At Ser-301 the chain carries Phosphoserine.

This sequence belongs to the MIP/aquaporin (TC 1.A.8) family. NIP (TC 1.A.8.12) subfamily. In terms of tissue distribution, expressed in rosette leaves.

The protein resides in the cell membrane. Its function is as follows. Boric acid transporter. Low water transport activity. Plays an important role as plasma membrane boric acid channel for the boron uptake required for plant growth and development under boron limitation. The chain is Probable aquaporin NIP5-1 (NIP5-1) from Arabidopsis thaliana (Mouse-ear cress).